We begin with the raw amino-acid sequence, 500 residues long: Pentatricopeptide repeat-containing protein At1g05750, chloroplastic (500 aa).

A chloroplast-targeting transit peptide spans 1-54 (MGLLPVVGITSPALITHKNHANPKIQRHNQSTSETTVSWTSRINLLTRNGRLAE). PPR repeat units lie at residues 35–69 (TTVS…GVEP), 70–106 (NHIT…GLDR), 108–138 (HVMV…MEDK), 139–173 (NSVT…DLIS), 174–204 (WTAM…GVKP), 205–239 (DYVA…DFKN), 240–270 (NVRV…MEKR), 271–305 (TVVS…GFKP), 306–336 (DAVT…MKCD), and 342–376 (RIEH…PNEV). The segment at 377–453 (VIGSLLAACS…QPGFSSIEID (77 aa)) is type E motif. Positions 454 to 484 (DCMHVFMAGDNAHVETTYIREVLELISSDLR) are type E(+) motif.

Belongs to the PPR family. PCMP-E subfamily.

The protein resides in the plastid. Its subcellular location is the chloroplast. The polypeptide is Pentatricopeptide repeat-containing protein At1g05750, chloroplastic (PDE247) (Arabidopsis thaliana (Mouse-ear cress)).